We begin with the raw amino-acid sequence, 308 residues long: tRNA dimethylallyltransferase (308 aa).

Residue 10-17 coordinates ATP; the sequence is GPTASGKT. A substrate-binding site is contributed by 12-17; it reads TASGKT. 2 interaction with substrate tRNA regions span residues 35 to 38 and 159 to 163; these read DSSL and QRIFR.

Belongs to the IPP transferase family. As to quaternary structure, monomer. Mg(2+) serves as cofactor.

It catalyses the reaction adenosine(37) in tRNA + dimethylallyl diphosphate = N(6)-dimethylallyladenosine(37) in tRNA + diphosphate. Functionally, catalyzes the transfer of a dimethylallyl group onto the adenine at position 37 in tRNAs that read codons beginning with uridine, leading to the formation of N6-(dimethylallyl)adenosine (i(6)A). The polypeptide is tRNA dimethylallyltransferase (Francisella tularensis subsp. tularensis (strain FSC 198)).